The following is a 235-amino-acid chain: Carboxy-S-adenosyl-L-methionine synthase (235 aa).

S-adenosyl-L-methionine-binding positions include Tyr35, 60–62 (GCS), 83–84 (DN), Asn124, and Arg191.

This sequence belongs to the class I-like SAM-binding methyltransferase superfamily. Cx-SAM synthase family. In terms of assembly, homodimer.

The catalysed reaction is prephenate + S-adenosyl-L-methionine = carboxy-S-adenosyl-L-methionine + 3-phenylpyruvate + H2O. Functionally, catalyzes the conversion of S-adenosyl-L-methionine (SAM) to carboxy-S-adenosyl-L-methionine (Cx-SAM). This Campylobacter jejuni subsp. doylei (strain ATCC BAA-1458 / RM4099 / 269.97) protein is Carboxy-S-adenosyl-L-methionine synthase.